The sequence spans 321 residues: Eukaryotic translation initiation factor 3 subunit I (321 aa).

WD repeat units lie at residues 8 to 47 (GHER…RLGT), 50 to 89 (GHGG…TLSK), 140 to 179 (VDNS…KLIS), 182 to 221 (EHSK…HLKT), and 279 to 318 (GHFG…DDIE).

This sequence belongs to the eIF-3 subunit I family. As to quaternary structure, component of the eukaryotic translation initiation factor 3 (eIF-3) complex.

It localises to the cytoplasm. Functionally, component of the eukaryotic translation initiation factor 3 (eIF-3) complex, which is involved in protein synthesis of a specialized repertoire of mRNAs and, together with other initiation factors, stimulates binding of mRNA and methionyl-tRNAi to the 40S ribosome. The eIF-3 complex specifically targets and initiates translation of a subset of mRNAs involved in cell proliferation. This Nematostella vectensis (Starlet sea anemone) protein is Eukaryotic translation initiation factor 3 subunit I.